A 111-amino-acid chain; its full sequence is Macrodomain Ori protein (111 aa).

Belongs to the MaoP family.

Its function is as follows. Involved in the organization of the Ori region of the chromosome into a macrodomain (MD). It constrains DNA mobility in the Ori macrodomain and limits long-distance DNA interactions with other chromosomal regions. This chain is Macrodomain Ori protein, found in Haemophilus influenzae (strain ATCC 51907 / DSM 11121 / KW20 / Rd).